A 718-amino-acid chain; its full sequence is Polyribonucleotide nucleotidyltransferase (718 aa).

Residues Asp-506 and Asp-512 each coordinate Mg(2+). Residues 572–632 (PKLELFSVDP…EQIKAAKDYI (61 aa)) form the KH domain. Residues 657 to 718 (GQEFQGIVKK…NGKISVDLCE (62 aa)) form the S1 motif domain.

This sequence belongs to the polyribonucleotide nucleotidyltransferase family. Requires Mg(2+) as cofactor.

Its subcellular location is the cytoplasm. It catalyses the reaction RNA(n+1) + phosphate = RNA(n) + a ribonucleoside 5'-diphosphate. In terms of biological role, involved in mRNA degradation. Catalyzes the phosphorolysis of single-stranded polyribonucleotides processively in the 3'- to 5'-direction. This Campylobacter jejuni subsp. doylei (strain ATCC BAA-1458 / RM4099 / 269.97) protein is Polyribonucleotide nucleotidyltransferase.